A 58-amino-acid polypeptide reads, in one-letter code: Large ribosomal subunit protein bL32c (58 aa).

The disordered stretch occupies residues 1 to 23; sequence MAVPKKRTSKAKKNARKSVWKKK.

The protein belongs to the bacterial ribosomal protein bL32 family.

The protein resides in the plastid. The protein localises to the chloroplast. The polypeptide is Large ribosomal subunit protein bL32c (rpl32-A) (Trieres chinensis (Marine centric diatom)).